We begin with the raw amino-acid sequence, 452 residues long: Phosphoglucosamine mutase (452 aa).

Residue S103 is the Phosphoserine intermediate of the active site. Mg(2+)-binding residues include S103, D243, D245, and D247. At S103 the chain carries Phosphoserine.

The protein belongs to the phosphohexose mutase family. It depends on Mg(2+) as a cofactor. Activated by phosphorylation.

It catalyses the reaction alpha-D-glucosamine 1-phosphate = D-glucosamine 6-phosphate. In terms of biological role, catalyzes the conversion of glucosamine-6-phosphate to glucosamine-1-phosphate. This is Phosphoglucosamine mutase from Limosilactobacillus fermentum (strain NBRC 3956 / LMG 18251) (Lactobacillus fermentum).